Consider the following 372-residue polypeptide: Heat-inducible transcription repressor HrcA (372 aa).

Residues 300 to 334 (YGRSGAAGEPAGNDPVGEPETESETESQTNDTEPI) are disordered.

This sequence belongs to the HrcA family.

Negative regulator of class I heat shock genes (grpE-dnaK-dnaJ and groELS operons). Prevents heat-shock induction of these operons. In Bifidobacterium longum (strain NCC 2705), this protein is Heat-inducible transcription repressor HrcA.